Here is a 127-residue protein sequence, read N- to C-terminus: Protein ApaG (127 aa).

The ApaG domain maps to D3–H127.

The sequence is that of Protein ApaG from Acidithiobacillus ferrooxidans (strain ATCC 23270 / DSM 14882 / CIP 104768 / NCIMB 8455) (Ferrobacillus ferrooxidans (strain ATCC 23270)).